Reading from the N-terminus, the 434-residue chain is Alpha-enolase (434 aa).

S40 is a binding site for Mg(2+). Substrate is bound by residues H158 and E167. The active-site Proton donor is E210. Positions 245, 293, and 318 each coordinate Mg(2+). Substrate is bound by residues E293 and D318. K343 acts as the Proton acceptor in catalysis. Substrate contacts are provided by residues 370–373 (SHRS) and K394.

The protein belongs to the enolase family. As to quaternary structure, homodimer. It depends on Mg(2+) as a cofactor.

Its subcellular location is the cytoplasm. It catalyses the reaction (2R)-2-phosphoglycerate = phosphoenolpyruvate + H2O. It functions in the pathway carbohydrate degradation; glycolysis; pyruvate from D-glyceraldehyde 3-phosphate: step 4/5. This Xenopus laevis (African clawed frog) protein is Alpha-enolase (eno1).